Consider the following 1600-residue polypeptide: E3 ubiquitin-protein ligase listerin (1600 aa).

11 HEAT repeats span residues serine 31–lysine 65, lysine 114–glutamine 150, glycine 161–alanine 202, tyrosine 245–arginine 288, isoleucine 291–alanine 344, arginine 526–serine 606, tyrosine 853–threonine 904, tyrosine 962–phenylalanine 986, leucine 1045–threonine 1083, valine 1289–asparagine 1324, and serine 1325–threonine 1369. Residues cysteine 1537–arginine 1583 form an RING-type; degenerate zinc finger.

Belongs to the LTN1 family. Component of the ribosome quality control complex (RQC), composed of the E3 ubiquitin ligase RKR1/LTN1, RQC1 and RQC2, as well as CDC48 and its ubiquitin-binding cofactors associated with the 60S ribosomal subunits.

The protein resides in the nucleus. Its subcellular location is the cytoplasm. The protein localises to the cytosol. It catalyses the reaction S-ubiquitinyl-[E2 ubiquitin-conjugating enzyme]-L-cysteine + [acceptor protein]-L-lysine = [E2 ubiquitin-conjugating enzyme]-L-cysteine + N(6)-ubiquitinyl-[acceptor protein]-L-lysine.. Its pathway is protein modification; protein ubiquitination. E3 ubiquitin-protein ligase component of the ribosome quality control complex (RQC), a ribosome-associated complex that mediates ubiquitination and extraction of incompletely synthesized nascent chains for proteasomal degradation. Mediates ubiquitination of proteins derived from mRNAs lacking stop codons (non-stop proteins) and other translation arrest products induced by poly-lysine sequences and tandem rare codons. Ubiquitination leads to CDC48 recruitment for extraction and degradation of the incomplete translation product. May indirectly play a role in chromatin function and transcription. The chain is E3 ubiquitin-protein ligase listerin (rkr-1) from Neurospora crassa (strain ATCC 24698 / 74-OR23-1A / CBS 708.71 / DSM 1257 / FGSC 987).